Here is a 126-residue protein sequence, read N- to C-terminus: Large ribosomal subunit protein eL8 (126 aa).

This sequence belongs to the eukaryotic ribosomal protein eL8 family. In terms of assembly, part of the 50S ribosomal subunit. Probably part of the RNase P complex.

It is found in the cytoplasm. Multifunctional RNA-binding protein that recognizes the K-turn motif in ribosomal RNA, the RNA component of RNase P, box H/ACA, box C/D and box C'/D' sRNAs. The chain is Large ribosomal subunit protein eL8 from Cenarchaeum symbiosum (strain A).